Consider the following 226-residue polypeptide: PDGF-related-transforming protein sis (226 aa).

The segment covering 201-215 (RRPPKGKHRKCKHTH) has biased composition (basic residues). Residues 201–226 (RRPPKGKHRKCKHTHDKTALKETLGA) form a disordered region.

Belongs to the PDGF/VEGF growth factor family.

This is PDGF-related-transforming protein sis (V-SIS) from Woolly monkey sarcoma virus (WMSV).